Here is a 189-residue protein sequence, read N- to C-terminus: GTP cyclohydrolase 1 (189 aa).

Residues C79, H82, and C150 each contribute to the Zn(2+) site.

The protein belongs to the GTP cyclohydrolase I family. In terms of assembly, homomer.

It carries out the reaction GTP + H2O = 7,8-dihydroneopterin 3'-triphosphate + formate + H(+). It participates in cofactor biosynthesis; 7,8-dihydroneopterin triphosphate biosynthesis; 7,8-dihydroneopterin triphosphate from GTP: step 1/1. This Rickettsia peacockii (strain Rustic) protein is GTP cyclohydrolase 1.